The chain runs to 196 residues: Nucleoside triphosphate pyrophosphatase (196 aa).

Residue Asp-73 is the Proton acceptor of the active site.

The protein belongs to the Maf family. A divalent metal cation is required as a cofactor.

The protein localises to the cytoplasm. The catalysed reaction is a ribonucleoside 5'-triphosphate + H2O = a ribonucleoside 5'-phosphate + diphosphate + H(+). The enzyme catalyses a 2'-deoxyribonucleoside 5'-triphosphate + H2O = a 2'-deoxyribonucleoside 5'-phosphate + diphosphate + H(+). Functionally, nucleoside triphosphate pyrophosphatase. May have a dual role in cell division arrest and in preventing the incorporation of modified nucleotides into cellular nucleic acids. This Anaplasma marginale (strain St. Maries) protein is Nucleoside triphosphate pyrophosphatase.